The following is a 217-amino-acid chain: Uracil-DNA glycosylase (217 aa).

Asp62 acts as the Proton acceptor in catalysis.

It belongs to the uracil-DNA glycosylase (UDG) superfamily. UNG family.

The protein localises to the cytoplasm. It catalyses the reaction Hydrolyzes single-stranded DNA or mismatched double-stranded DNA and polynucleotides, releasing free uracil.. Its function is as follows. Excises uracil residues from the DNA which can arise as a result of misincorporation of dUMP residues by DNA polymerase or due to deamination of cytosine. In Streptococcus suis (strain 98HAH33), this protein is Uracil-DNA glycosylase.